The following is a 54-amino-acid chain: Ribulose bisphosphate carboxylase large chain (54 aa).

A propeptide spanning residues 1–2 (MS) is cleaved from the precursor. Position 3 is an N-acetylproline (P3). K14 bears the N6,N6,N6-trimethyllysine mark.

It belongs to the RuBisCO large chain family. Type I subfamily. In terms of assembly, heterohexadecamer of 8 large chains and 8 small chains.

It localises to the plastid. The protein resides in the chloroplast. The catalysed reaction is 2 (2R)-3-phosphoglycerate + 2 H(+) = D-ribulose 1,5-bisphosphate + CO2 + H2O. It carries out the reaction D-ribulose 1,5-bisphosphate + O2 = 2-phosphoglycolate + (2R)-3-phosphoglycerate + 2 H(+). In terms of biological role, ruBisCO catalyzes two reactions: the carboxylation of D-ribulose 1,5-bisphosphate, the primary event in carbon dioxide fixation, as well as the oxidative fragmentation of the pentose substrate in the photorespiration process. Both reactions occur simultaneously and in competition at the same active site. The sequence is that of Ribulose bisphosphate carboxylase large chain (rbcL) from Geum borisii (Avens).